Consider the following 245-residue polypeptide: Adenosylcobinamide-GDP ribazoletransferase (245 aa).

5 consecutive transmembrane segments (helical) span residues 31–51 (FGRAVLCYPLVGVLIGVVLYG), 61–81 (PLLQAALLLSLWVALSGALHL), 113–133 (AAVVALVLVLLLKFGALAALL), 138–158 (PGLLLLAPWLARSSLPLLFLT), and 192–212 (LAFGLSGLLALLVTLMLFAWL).

The protein belongs to the CobS family. Mg(2+) serves as cofactor.

The protein resides in the cell inner membrane. It catalyses the reaction alpha-ribazole + adenosylcob(III)inamide-GDP = adenosylcob(III)alamin + GMP + H(+). The enzyme catalyses alpha-ribazole 5'-phosphate + adenosylcob(III)inamide-GDP = adenosylcob(III)alamin 5'-phosphate + GMP + H(+). It participates in cofactor biosynthesis; adenosylcobalamin biosynthesis; adenosylcobalamin from cob(II)yrinate a,c-diamide: step 7/7. Functionally, joins adenosylcobinamide-GDP and alpha-ribazole to generate adenosylcobalamin (Ado-cobalamin). Also synthesizes adenosylcobalamin 5'-phosphate from adenosylcobinamide-GDP and alpha-ribazole 5'-phosphate. The protein is Adenosylcobinamide-GDP ribazoletransferase of Pseudomonas paraeruginosa (strain DSM 24068 / PA7) (Pseudomonas aeruginosa (strain PA7)).